The sequence spans 91 residues: DNA-directed RNA polymerase subunit omega (91 aa).

This sequence belongs to the RNA polymerase subunit omega family. As to quaternary structure, the RNAP catalytic core consists of 2 alpha, 1 beta, 1 beta' and 1 omega subunit. When a sigma factor is associated with the core the holoenzyme is formed, which can initiate transcription. The rRNA transcription and antitermination complex (rrnTAC) consists of RNAP, NusA, NusB, NusE (rpsJ), NusG, SubB, ribosomal protein S4, DNA and precursor rRNA; S4 is more flexible than other subunits.

The catalysed reaction is RNA(n) + a ribonucleoside 5'-triphosphate = RNA(n+1) + diphosphate. In terms of biological role, promotes RNA polymerase (RNAP) assembly. Latches the N- and C-terminal regions of the beta' subunit thereby facilitating its interaction with the beta and alpha subunits. Its function is as follows. Part of the processive rRNA transcription and antitermination complex (rrnTAC). The complex forms an RNA-chaperone ring around the RNA exit tunnel of RNAP. It supports rapid transcription and antitermination of rRNA operons, cotranscriptional rRNA folding, and annealing of distal rRNA regions to allow correct ribosome biogenesis. This chain is DNA-directed RNA polymerase subunit omega (rpoZ), found in Escherichia coli (strain K12).